The following is a 248-amino-acid chain: Exosome complex component Rrp41 (248 aa).

The protein belongs to the RNase PH family. Rrp41 subfamily. Component of the archaeal exosome complex. Forms a hexameric ring-like arrangement composed of 3 Rrp41-Rrp42 heterodimers. The hexameric ring associates with a trimer of Rrp4 and/or Csl4 subunits.

It localises to the cytoplasm. Functionally, catalytic component of the exosome, which is a complex involved in RNA degradation. Has 3'-&gt;5' exoribonuclease activity. Can also synthesize heteromeric RNA-tails. Binds RNA. This chain is Exosome complex component Rrp41, found in Saccharolobus solfataricus (strain ATCC 35092 / DSM 1617 / JCM 11322 / P2) (Sulfolobus solfataricus).